The following is a 946-amino-acid chain: Bifunctional glutamine synthetase adenylyltransferase/adenylyl-removing enzyme (946 aa).

The segment at 1-440 (MKPLSSPLQQ…VFNELIGDDE (440 aa)) is adenylyl removase. An adenylyl transferase region spans residues 449 to 946 (SEQWRELWQD…ASWQKWLVEE (498 aa)).

Belongs to the GlnE family. Requires Mg(2+) as cofactor.

It carries out the reaction [glutamine synthetase]-O(4)-(5'-adenylyl)-L-tyrosine + phosphate = [glutamine synthetase]-L-tyrosine + ADP. It catalyses the reaction [glutamine synthetase]-L-tyrosine + ATP = [glutamine synthetase]-O(4)-(5'-adenylyl)-L-tyrosine + diphosphate. Involved in the regulation of glutamine synthetase GlnA, a key enzyme in the process to assimilate ammonia. When cellular nitrogen levels are high, the C-terminal adenylyl transferase (AT) inactivates GlnA by covalent transfer of an adenylyl group from ATP to specific tyrosine residue of GlnA, thus reducing its activity. Conversely, when nitrogen levels are low, the N-terminal adenylyl removase (AR) activates GlnA by removing the adenylyl group by phosphorolysis, increasing its activity. The regulatory region of GlnE binds the signal transduction protein PII (GlnB) which indicates the nitrogen status of the cell. The polypeptide is Bifunctional glutamine synthetase adenylyltransferase/adenylyl-removing enzyme (Shigella dysenteriae serotype 1 (strain Sd197)).